The sequence spans 482 residues: UDP-glycosyltransferase 86A2 (482 aa).

UDP-alpha-D-glucose-binding positions include Ser-297, 355–357 (CCQ), 372–380 (HCGWNSILE), and 394–397 (LTDQ).

This sequence belongs to the UDP-glycosyltransferase family.

The polypeptide is UDP-glycosyltransferase 86A2 (UGT86A2) (Arabidopsis thaliana (Mouse-ear cress)).